We begin with the raw amino-acid sequence, 178 residues long: Transcriptional repressor NrdR (178 aa).

The disordered stretch occupies residues 1–21 (MRCPFCGHEDTQVKDSRPHED). A zinc finger lies at 3–34 (CPFCGHEDTQVKDSRPHEDGAAIRRRRICAAC). The span at 7–21 (GHEDTQVKDSRPHED) shows a compositional bias: basic and acidic residues. The ATP-cone domain maps to 49–139 (LYVVKADDRR…VHWDFRETKD (91 aa)).

Belongs to the NrdR family. It depends on Zn(2+) as a cofactor.

Its function is as follows. Negatively regulates transcription of bacterial ribonucleotide reductase nrd genes and operons by binding to NrdR-boxes. This chain is Transcriptional repressor NrdR, found in Gluconacetobacter diazotrophicus (strain ATCC 49037 / DSM 5601 / CCUG 37298 / CIP 103539 / LMG 7603 / PAl5).